The sequence spans 326 residues: UDP-N-acetylglucosamine transporter (326 aa).

Helical transmembrane passes span 8-24 (LSLG…VLTM), 42-58 (AVVV…ILLV), 138-154 (VYQW…VAFV), 174-190 (FVGL…SGFA), 210-226 (IQLG…GVYI), 247-263 (IVVI…AAVI), 269-285 (ILKG…STLI), and 296-312 (TSVF…ATFL).

Belongs to the nucleotide-sugar transporter family. SLC35A subfamily. In terms of assembly, interacts with SLC35A2; the interaction is reduced in the presence of SLC35A4. Found in a complex with SLC35A2 and SLC35A4.

The protein localises to the golgi apparatus membrane. Functionally, uridine diphosphate-N-acetylglucosamine (UDP-GlcNAc) transporter in the Golgi apparatus. May supply UDP-GlcNAc as substrate for Golgi-resident glycosyltransferases that generate branching of diantennary oligosaccharides. This Canis lupus familiaris (Dog) protein is UDP-N-acetylglucosamine transporter (SLC35A3).